Consider the following 218-residue polypeptide: NAD(P)H-quinone oxidoreductase subunit I (218 aa).

2 consecutive 4Fe-4S ferredoxin-type domains span residues 55 to 84 and 95 to 124; these read GRIH…VDWV and RNYS…MTEE. The [4Fe-4S] cluster site is built by Cys64, Cys67, Cys70, Cys74, Cys104, Cys107, Cys110, and Cys114. The segment at 169–218 is disordered; it reads MDPHELPANQQRAGKLPSQIIKELQAEKSEEKGNNNSSDIVPNKLNSTNK. The segment covering 192-201 has biased composition (basic and acidic residues); that stretch reads LQAEKSEEKG. Polar residues predominate over residues 202–218; the sequence is NNNSSDIVPNKLNSTNK.

This sequence belongs to the complex I 23 kDa subunit family. As to quaternary structure, NDH-1 is composed of at least 11 different subunits. The cofactor is [4Fe-4S] cluster.

Its subcellular location is the cellular thylakoid membrane. The catalysed reaction is a plastoquinone + NADH + (n+1) H(+)(in) = a plastoquinol + NAD(+) + n H(+)(out). It catalyses the reaction a plastoquinone + NADPH + (n+1) H(+)(in) = a plastoquinol + NADP(+) + n H(+)(out). NDH-1 shuttles electrons from an unknown electron donor, via FMN and iron-sulfur (Fe-S) centers, to quinones in the respiratory and/or the photosynthetic chain. The immediate electron acceptor for the enzyme in this species is believed to be plastoquinone. Couples the redox reaction to proton translocation, and thus conserves the redox energy in a proton gradient. The protein is NAD(P)H-quinone oxidoreductase subunit I of Prochlorococcus marinus (strain NATL1A).